The chain runs to 194 residues: Peptidyl-tRNA hydrolase (194 aa).

Y17 lines the tRNA pocket. Residue H22 is the Proton acceptor of the active site. TRNA is bound by residues F69, N71, and N117.

Belongs to the PTH family. In terms of assembly, monomer.

It localises to the cytoplasm. It carries out the reaction an N-acyl-L-alpha-aminoacyl-tRNA + H2O = an N-acyl-L-amino acid + a tRNA + H(+). Its function is as follows. Hydrolyzes ribosome-free peptidyl-tRNAs (with 1 or more amino acids incorporated), which drop off the ribosome during protein synthesis, or as a result of ribosome stalling. Functionally, catalyzes the release of premature peptidyl moieties from peptidyl-tRNA molecules trapped in stalled 50S ribosomal subunits, and thus maintains levels of free tRNAs and 50S ribosomes. The sequence is that of Peptidyl-tRNA hydrolase from Renibacterium salmoninarum (strain ATCC 33209 / DSM 20767 / JCM 11484 / NBRC 15589 / NCIMB 2235).